The sequence spans 117 residues: V-type sodium ATPase subunit F (117 aa).

The segment at 1 to 20 (MARILTRIKEAEENNQKKEE) is disordered. Residues 7–20 (RIKEAEENNQKKEE) are compositionally biased toward basic and acidic residues.

Belongs to the V-ATPase G subunit family.

Functionally, involved in ATP-driven sodium extrusion. The polypeptide is V-type sodium ATPase subunit F (ntpF) (Enterococcus hirae (strain ATCC 9790 / DSM 20160 / JCM 8729 / LMG 6399 / NBRC 3181 / NCIMB 6459 / NCDO 1258 / NCTC 12367 / WDCM 00089 / R)).